The sequence spans 227 residues: ATP synthase F(0) complex subunit a (227 aa).

6 consecutive transmembrane segments (helical) span residues 14 to 34 (FLGIPLIAIAILIPWMLFPSP), 69 to 89 (WAMILTALLLFLMTLNLLGLL), 98 to 118 (QLSMNMALAVPLWLATVLIGM), 139 to 159 (IPILIIIETISLFIRPLALGV), 165 to 185 (LTAGHLLIQLISTATFVMLSI), and 189 to 209 (IATLTFIVLALLTILEIAVAM).

This sequence belongs to the ATPase A chain family. In terms of assembly, component of the ATP synthase complex composed at least of ATP5F1A/subunit alpha, ATP5F1B/subunit beta, ATP5MC1/subunit c (homooctomer), MT-ATP6/subunit a, MT-ATP8/subunit 8, ATP5ME/subunit e, ATP5MF/subunit f, ATP5MG/subunit g, ATP5MK/subunit k, ATP5MJ/subunit j, ATP5F1C/subunit gamma, ATP5F1D/subunit delta, ATP5F1E/subunit epsilon, ATP5PF/subunit F6, ATP5PB/subunit b, ATP5PD/subunit d, ATP5PO/subunit OSCP. ATP synthase complex consists of a soluble F(1) head domain (subunits alpha(3) and beta(3)) - the catalytic core - and a membrane F(0) domain - the membrane proton channel (subunits c, a, 8, e, f, g, k and j). These two domains are linked by a central stalk (subunits gamma, delta, and epsilon) rotating inside the F1 region and a stationary peripheral stalk (subunits F6, b, d, and OSCP). Interacts with DNAJC30; interaction is direct.

It localises to the mitochondrion inner membrane. It catalyses the reaction H(+)(in) = H(+)(out). In terms of biological role, subunit a, of the mitochondrial membrane ATP synthase complex (F(1)F(0) ATP synthase or Complex V) that produces ATP from ADP in the presence of a proton gradient across the membrane which is generated by electron transport complexes of the respiratory chain. ATP synthase complex consist of a soluble F(1) head domain - the catalytic core - and a membrane F(1) domain - the membrane proton channel. These two domains are linked by a central stalk rotating inside the F(1) region and a stationary peripheral stalk. During catalysis, ATP synthesis in the catalytic domain of F(1) is coupled via a rotary mechanism of the central stalk subunits to proton translocation. With the subunit c (ATP5MC1), forms the proton-conducting channel in the F(0) domain, that contains two crucial half-channels (inlet and outlet) that facilitate proton movement from the mitochondrial intermembrane space (IMS) into the matrix. Protons are taken up via the inlet half-channel and released through the outlet half-channel, following a Grotthuss mechanism. The chain is ATP synthase F(0) complex subunit a from Polypterus ornatipinnis (Ornate bichir).